We begin with the raw amino-acid sequence, 314 residues long: uncharacterized protein (314 aa).

Residues 68 to 91 (EKKKKSSSFEKRDKRRVQLKEKSP) are compositionally biased toward basic and acidic residues. Disordered stretches follow at residues 68–97 (EKKK…TPRN) and 141–164 (MDVQ…RPAS). The span at 144–157 (QSPSTMSTSKNNVR) shows a compositional bias: polar residues.

The protein localises to the mitochondrion. This is an uncharacterized protein from Schizosaccharomyces pombe (strain 972 / ATCC 24843) (Fission yeast).